A 622-amino-acid polypeptide reads, in one-letter code: Low affinity potassium transport system protein Kup (622 aa).

12 helical membrane passes run 9 to 29 (LSAV…TSPL), 46 to 66 (PDVV…VVSV), 101 to 121 (ILVV…VITP), 137 to 157 (PALD…LFVI), 165 to 185 (VGKL…LLGL), 213 to 233 (VSFF…ALYA), 247 to 267 (WFTV…ALLL), 276 to 296 (PFFL…ATLA), 337 to 357 (IYIP…IIGF), 363 to 383 (LAAA…ILFC), 395 to 415 (FLVV…FSAN), and 416 to 436 (VLKL…MFII).

The protein belongs to the HAK/KUP transporter (TC 2.A.72) family.

The protein resides in the cell inner membrane. It catalyses the reaction K(+)(in) + H(+)(in) = K(+)(out) + H(+)(out). Functionally, responsible for the low-affinity transport of potassium into the cell. Likely operates as a K(+):H(+) symporter. The sequence is that of Low affinity potassium transport system protein Kup from Yersinia pestis (strain Pestoides F).